We begin with the raw amino-acid sequence, 129 residues long: Small ribosomal subunit protein uS13 (129 aa).

The span at 92 to 114 (HKHNLPVRGQRTKTNARTRRGPR) shows a compositional bias: basic residues. The interval 92-129 (HKHNLPVRGQRTKTNARTRRGPRKTVAGRGQKRGATKK) is disordered.

This sequence belongs to the universal ribosomal protein uS13 family. As to quaternary structure, part of the 30S ribosomal subunit. Forms a loose heterodimer with protein S19. Forms two bridges to the 50S subunit in the 70S ribosome.

Located at the top of the head of the 30S subunit, it contacts several helices of the 16S rRNA. In the 70S ribosome it contacts the 23S rRNA (bridge B1a) and protein L5 of the 50S subunit (bridge B1b), connecting the 2 subunits; these bridges are implicated in subunit movement. Contacts the tRNAs in the A and P-sites. The polypeptide is Small ribosomal subunit protein uS13 (Dehalococcoides mccartyi (strain ATCC BAA-2266 / KCTC 15142 / 195) (Dehalococcoides ethenogenes (strain 195))).